Consider the following 187-residue polypeptide: Chromophore lyase CpcS/CpeS 2 (187 aa).

Belongs to the CpcS/CpeS biliprotein lyase family.

Functionally, covalently attaches a chromophore to Cys residue(s) of phycobiliproteins. This chain is Chromophore lyase CpcS/CpeS 2, found in Synechococcus sp. (strain JA-3-3Ab) (Cyanobacteria bacterium Yellowstone A-Prime).